Reading from the N-terminus, the 577-residue chain is Sulfite reductase [NADPH] hemoprotein beta-component (577 aa).

[4Fe-4S] cluster contacts are provided by Cys-441, Cys-447, Cys-486, and Cys-490. Position 490 (Cys-490) interacts with siroheme.

Belongs to the nitrite and sulfite reductase 4Fe-4S domain family. Alpha(8)-beta(8). The alpha component is a flavoprotein, the beta component is a hemoprotein. The cofactor is siroheme. Requires [4Fe-4S] cluster as cofactor.

It carries out the reaction hydrogen sulfide + 3 NADP(+) + 3 H2O = sulfite + 3 NADPH + 4 H(+). It participates in sulfur metabolism; hydrogen sulfide biosynthesis; hydrogen sulfide from sulfite (NADPH route): step 1/1. Functionally, component of the sulfite reductase complex that catalyzes the 6-electron reduction of sulfite to sulfide. This is one of several activities required for the biosynthesis of L-cysteine from sulfate. This chain is Sulfite reductase [NADPH] hemoprotein beta-component, found in Pectobacterium atrosepticum (strain SCRI 1043 / ATCC BAA-672) (Erwinia carotovora subsp. atroseptica).